A 363-amino-acid chain; its full sequence is Serine/threonine-protein kinase SRK2A (363 aa).

In terms of domain architecture, Protein kinase spans 4-260 (YELVKDIGAG…IAEIKKHSWF (257 aa)). ATP is bound by residues 10–18 (IGAGNFGVA) and Lys33. The active-site Proton acceptor is Asp123. A disordered region spans residues 306 to 363 (SRSIGGFGWGGNGDADGKEEDAEDVEEEEEEVEEEEDDEDEYDKTVKEVHASGEVRIS). The segment covering 310 to 319 (GGFGWGGNGD) has biased composition (gly residues). The segment covering 322–347 (GKEEDAEDVEEEEEEVEEEEDDEDEY) has biased composition (acidic residues). Residues 348–363 (DKTVKEVHASGEVRIS) are compositionally biased toward basic and acidic residues.

This sequence belongs to the protein kinase superfamily. Ser/Thr protein kinase family. Interacts with TOPP1. In terms of tissue distribution, expressed in seedlings.

It carries out the reaction L-seryl-[protein] + ATP = O-phospho-L-seryl-[protein] + ADP + H(+). It catalyses the reaction L-threonyl-[protein] + ATP = O-phospho-L-threonyl-[protein] + ADP + H(+). The sequence is that of Serine/threonine-protein kinase SRK2A (SRK2A) from Arabidopsis thaliana (Mouse-ear cress).